We begin with the raw amino-acid sequence, 416 residues long: Orexin/Hypocretin receptor type 1 (416 aa).

The segment at 1-22 (MEPSATPGAQPGVPTSSGEPFH) is disordered. The Extracellular segment spans residues 1–46 (MEPSATPGAQPGVPTSSGEPFHLPPDYEDEFLRYLWRDYLYPKQYE). Positions 26-41 (DYEDEFLRYLWRDYLY) are required for response to orexin-A. A helical transmembrane segment spans residues 47-67 (WVLIAAYVAVFLIALVGNTLV). Residues 68-82 (CLAVWRNHHMRTVTN) are Cytoplasmic-facing. Residues 83–105 (YFIVNLSLADVLVTAICLPASLL) traverse the membrane as a helical segment. The Extracellular portion of the chain corresponds to 106 to 119 (VDITESWLFGQALC). An intrachain disulfide couples cysteine 119 to cysteine 202. A helical transmembrane segment spans residues 120 to 140 (KVIPYLQAVSVSVAVLTLSFI). Residues 141–160 (ALDRWYAICHPLLFKSTARR) lie on the Cytoplasmic side of the membrane. Residues 161 to 182 (ARGSILGIWAVSLAVMVPQAAV) traverse the membrane as a helical segment. Residues 183–213 (MECSSVLPELANRTRLFSVCDEHWADELYPK) are Extracellular-facing. The N-linked (GlcNAc...) asparagine glycan is linked to asparagine 194. A helical transmembrane segment spans residues 214 to 235 (IYHSCFFIVTYLAPLGLMAMAY). Topologically, residues 236–298 (FQIFRKLWGR…QMRARRKTAK (63 aa)) are cytoplasmic. Residues 299–321 (MLMVVLLVFALCYLPISVLNVLK) traverse the membrane as a helical segment. Residues 322 to 336 (RVFGMFRQASDREAV) lie on the Extracellular side of the membrane. Residues 337-360 (YACFTFSHWLVYANSAANPIIYNF) traverse the membrane as a helical segment. At 361-416 (LSGKFREQFKAAFSCCLPGLGPGSSARHKSLSLQSRCSVSKVSEHVVLTTVTTVLS) the chain is on the cytoplasmic side.

Belongs to the G-protein coupled receptor 1 family. Widely expressed.

It localises to the cell membrane. Its function is as follows. Moderately selective excitatory receptor for orexin-A and, with a lower affinity, for orexin-B neuropeptide. Triggers an increase in cytoplasmic Ca(2+) levels in response to orexin-A binding. This is Orexin/Hypocretin receptor type 1 from Mus musculus (Mouse).